The primary structure comprises 453 residues: MSRIEKIIAREVLDSRGTPTVEVELWTEFGGYGIAKAPSGASTGENEALELRDGDKARYNGKGVLKAVANVNDKIAPALIGHDVQDQLGLDRVMIKLDGTEFKKKLGANGMLAVSLAAAHAAASELEVPLYRYIGGVQAKRLPVPMLNVINGGEHADSAIDFQEFMIMPVGAPTFKEALRWSSETFQALKSLLHDKGDITAVGDEGGFAPHFSWAYAKQDLASFKAKTPAEIALDLLVEAITKAGYKVGKDGIMIAMDCASSELYFEDKKYHFKKIEKVTGQEWAFTTEEMIAYLEKLVNNYPIISIEDGLSEKDWDGFVQLTEKIGDRVQIVGDDLFTTNPRFIKEGISKDAANSTLIKLNQIGTLSETVEAITMTQKAGWTAVVSHRSGETEDATIADLAVAFNAGQIKTGSMSRSDRIAKYNRLLQIEDQLGEDAIYDGYATFYNLKINK.

Glutamine 163 lines the (2R)-2-phosphoglycerate pocket. Glutamate 205 acts as the Proton donor in catalysis. Aspartate 258, glutamate 308, and aspartate 335 together coordinate Mg(2+). Residues lysine 360, arginine 389, serine 390, and lysine 411 each contribute to the (2R)-2-phosphoglycerate site. Catalysis depends on lysine 360, which acts as the Proton acceptor.

It belongs to the enolase family. Requires Mg(2+) as cofactor.

The protein localises to the cytoplasm. It is found in the secreted. Its subcellular location is the cell surface. The catalysed reaction is (2R)-2-phosphoglycerate = phosphoenolpyruvate + H2O. Its pathway is carbohydrate degradation; glycolysis; pyruvate from D-glyceraldehyde 3-phosphate: step 4/5. In terms of biological role, catalyzes the reversible conversion of 2-phosphoglycerate (2-PG) into phosphoenolpyruvate (PEP). It is essential for the degradation of carbohydrates via glycolysis. This chain is Enolase, found in Mesoplasma florum (strain ATCC 33453 / NBRC 100688 / NCTC 11704 / L1) (Acholeplasma florum).